The primary structure comprises 612 residues: Elongation factor 4 (612 aa).

The tr-type G domain maps to 11–193 (KHIRNFSIVA…RIVTDISAPT (183 aa)). GTP is bound by residues 23 to 28 (DHGKST) and 140 to 143 (NKID).

This sequence belongs to the TRAFAC class translation factor GTPase superfamily. Classic translation factor GTPase family. LepA subfamily.

Its subcellular location is the cell membrane. The catalysed reaction is GTP + H2O = GDP + phosphate + H(+). In terms of biological role, required for accurate and efficient protein synthesis under certain stress conditions. May act as a fidelity factor of the translation reaction, by catalyzing a one-codon backward translocation of tRNAs on improperly translocated ribosomes. Back-translocation proceeds from a post-translocation (POST) complex to a pre-translocation (PRE) complex, thus giving elongation factor G a second chance to translocate the tRNAs correctly. Binds to ribosomes in a GTP-dependent manner. The sequence is that of Elongation factor 4 from Lactobacillus delbrueckii subsp. bulgaricus (strain ATCC 11842 / DSM 20081 / BCRC 10696 / JCM 1002 / NBRC 13953 / NCIMB 11778 / NCTC 12712 / WDCM 00102 / Lb 14).